The primary structure comprises 272 residues: Phosphatidylglycerol--prolipoprotein diacylglyceryl transferase (272 aa).

A run of 4 helical transmembrane segments spans residues isoleucine 21–alanine 41, tyrosine 60–tyrosine 80, glycine 101–alanine 121, and valine 131–glycine 151. Arginine 152 is an a 1,2-diacyl-sn-glycero-3-phospho-(1'-sn-glycerol) binding site. The next 3 helical transmembrane spans lie at proline 181–tyrosine 201, glycine 209–phenylalanine 229, and leucine 244–valine 264.

The protein belongs to the Lgt family.

It localises to the cell inner membrane. It carries out the reaction L-cysteinyl-[prolipoprotein] + a 1,2-diacyl-sn-glycero-3-phospho-(1'-sn-glycerol) = an S-1,2-diacyl-sn-glyceryl-L-cysteinyl-[prolipoprotein] + sn-glycerol 1-phosphate + H(+). It participates in protein modification; lipoprotein biosynthesis (diacylglyceryl transfer). Catalyzes the transfer of the diacylglyceryl group from phosphatidylglycerol to the sulfhydryl group of the N-terminal cysteine of a prolipoprotein, the first step in the formation of mature lipoproteins. This chain is Phosphatidylglycerol--prolipoprotein diacylglyceryl transferase, found in Aliarcobacter butzleri (strain RM4018) (Arcobacter butzleri).